The chain runs to 70 residues: Guanine nucleotide-binding protein G(I)/G(S)/G(O) subunit gamma-8 (70 aa).

C67 is modified (cysteine methyl ester). Residue C67 is the site of S-geranylgeranyl cysteine attachment. A propeptide spans 68 to 70 (TLL) (removed in mature form).

It belongs to the G protein gamma family. In terms of assembly, g proteins are composed of 3 units, alpha, beta and gamma. As to expression, detected in the olfactory epithelium, the vomeronasal epithelium and, to a lesser extent, the olfactory bulb.

The protein localises to the cell membrane. In terms of biological role, guanine nucleotide-binding proteins (G proteins) are involved as a modulator or transducer in various transmembrane signaling systems. The beta and gamma chains are required for the GTPase activity, for replacement of GDP by GTP, and for G protein-effector interaction. This subunit may have a very specific role in the development and turnover of olfactory and vomeronasal neurons. The protein is Guanine nucleotide-binding protein G(I)/G(S)/G(O) subunit gamma-8 (Gng8) of Rattus norvegicus (Rat).